The following is a 187-amino-acid chain: Large ribosomal subunit protein uL22B (187 aa).

The protein belongs to the universal ribosomal protein uL22 family. In terms of assembly, component of the large ribosomal subunit (LSU). Mature yeast ribosomes consist of a small (40S) and a large (60S) subunit. The 40S small subunit contains 1 molecule of ribosomal RNA (18S rRNA) and at least 33 different proteins. The large 60S subunit contains 3 rRNA molecules (25S, 5.8S and 5S rRNA) and at least 46 different proteins. uL22 is associated with the polypeptide exit tunnel.

It is found in the cytoplasm. Component of the ribosome, a large ribonucleoprotein complex responsible for the synthesis of proteins in the cell. The small ribosomal subunit (SSU) binds messenger RNAs (mRNAs) and translates the encoded message by selecting cognate aminoacyl-transfer RNA (tRNA) molecules. The large subunit (LSU) contains the ribosomal catalytic site termed the peptidyl transferase center (PTC), which catalyzes the formation of peptide bonds, thereby polymerizing the amino acids delivered by tRNAs into a polypeptide chain. The nascent polypeptides leave the ribosome through a tunnel in the LSU and interact with protein factors that function in enzymatic processing, targeting, and the membrane insertion of nascent chains at the exit of the ribosomal tunnel. This is Large ribosomal subunit protein uL22B (rpl1702) from Schizosaccharomyces pombe (strain 972 / ATCC 24843) (Fission yeast).